A 130-amino-acid polypeptide reads, in one-letter code: Glycine cleavage system H protein (130 aa).

Residues 23–105 (IGIIGITDFA…YGKGWMIKVE (83 aa)) form the Lipoyl-binding domain. Lys-64 carries the post-translational modification N6-lipoyllysine.

The protein belongs to the GcvH family. In terms of assembly, the glycine cleavage system is composed of four proteins: P, T, L and H. It depends on (R)-lipoate as a cofactor.

Its function is as follows. The glycine cleavage system catalyzes the degradation of glycine. The H protein shuttles the methylamine group of glycine from the P protein to the T protein. In Carboxydothermus hydrogenoformans (strain ATCC BAA-161 / DSM 6008 / Z-2901), this protein is Glycine cleavage system H protein.